The chain runs to 101 residues: Urease subunit beta (101 aa).

Belongs to the urease beta subunit family. In terms of assembly, heterotrimer of UreA (gamma), UreB (beta) and UreC (alpha) subunits. Three heterotrimers associate to form the active enzyme.

Its subcellular location is the cytoplasm. The catalysed reaction is urea + 2 H2O + H(+) = hydrogencarbonate + 2 NH4(+). The protein operates within nitrogen metabolism; urea degradation; CO(2) and NH(3) from urea (urease route): step 1/1. In Rhizobium leguminosarum bv. trifolii (strain WSM2304), this protein is Urease subunit beta.